A 259-amino-acid chain; its full sequence is tRNA (guanine-N(7)-)-methyltransferase (259 aa).

The tract at residues 1–73 is disordered; it reads MGHHGQMHAQ…GPAEDPDRPG (73 aa). Glutamate 91, glutamate 116, asparagine 143, and aspartate 166 together coordinate S-adenosyl-L-methionine. Aspartate 166 is an active-site residue. Residues lysine 170, aspartate 202, and 238–241 contribute to the substrate site; that span reads TKYE.

It belongs to the class I-like SAM-binding methyltransferase superfamily. TrmB family.

It carries out the reaction guanosine(46) in tRNA + S-adenosyl-L-methionine = N(7)-methylguanosine(46) in tRNA + S-adenosyl-L-homocysteine. The protein operates within tRNA modification; N(7)-methylguanine-tRNA biosynthesis. In terms of biological role, catalyzes the formation of N(7)-methylguanine at position 46 (m7G46) in tRNA. This Mycolicibacterium paratuberculosis (strain ATCC BAA-968 / K-10) (Mycobacterium paratuberculosis) protein is tRNA (guanine-N(7)-)-methyltransferase.